A 297-amino-acid polypeptide reads, in one-letter code: MSPKDLTIPTGADGEGSVQVHLDEADKITGAKVFAVYGKGGIGKSTTSSNLSAAFSILGKRVLQIGCDPKHDSTFTLTGSLVPTVIDVLKDVDFHPEELRPEDFVFEGFNGVMCVEAGGPPAGTGCGGYVVGQTVKLLKQHHLLDDTDVVIFDVLGDVVCGGFAAPLQHADQAVVVTANDFDSIYAMNRIIAAVQAKSKNYKVRLAGCVANRSRATDEVDRFCKETNFRRLAHMPDLDAIRRSRLKKKTLFEMDEDQDVLAARAEYIRLAESLWRGLDPIDPHSLPDRDIFELLGFD.

ATP contacts are provided by residues 41–46 and K70; that span reads GIGKST. S45 is a binding site for Mg(2+). C126 and C160 together coordinate [4Fe-4S] cluster. Residues 211–212 and 235–237 contribute to the ATP site; these read NR and PDL.

It belongs to the NifH/BchL/ChlL family. Homodimer. Protochlorophyllide reductase is composed of three subunits; BchL, BchN and BchB. Requires [4Fe-4S] cluster as cofactor.

It carries out the reaction chlorophyllide a + oxidized 2[4Fe-4S]-[ferredoxin] + 2 ADP + 2 phosphate = protochlorophyllide a + reduced 2[4Fe-4S]-[ferredoxin] + 2 ATP + 2 H2O. The protein operates within porphyrin-containing compound metabolism; bacteriochlorophyll biosynthesis (light-independent). Its function is as follows. Component of the dark-operative protochlorophyllide reductase (DPOR) that uses Mg-ATP and reduced ferredoxin to reduce ring D of protochlorophyllide (Pchlide) to form chlorophyllide a (Chlide). This reaction is light-independent. The L component serves as a unique electron donor to the NB-component of the complex, and binds Mg-ATP. The polypeptide is Light-independent protochlorophyllide reductase iron-sulfur ATP-binding protein (Cereibacter sphaeroides (strain KD131 / KCTC 12085) (Rhodobacter sphaeroides)).